The primary structure comprises 2871 residues: Fibrillin-1 (2871 aa).

Positions 1–24 are cleaved as a signal peptide; it reads MRRGRLLEVALGFTVLLASYTSHR. Residues 25-44 constitute a propeptide that is removed on maturation; that stretch reads AEANLEAGNGKETRASRAKR. Basic and acidic residues predominate over residues 29–39; that stretch reads LEAGNGKETRA. Positions 29 to 49 are disordered; that stretch reads LEAGNGKETRASRAKRRGGGG. Residues 45-81 are fibrillin unique N-terminal (FUN) domain; the sequence is RGGGGHDALKGPNVCGSRYNAYCCPGWKTLPGGNQCI. The interval 45–450 is N-terminal domain; it reads RGGGGHDALK…PPRVLPVNVT (406 aa). 11 cysteine pairs are disulfide-bonded: cysteine 59–cysteine 68, cysteine 67–cysteine 80, cysteine 85–cysteine 94, cysteine 89–cysteine 100, cysteine 102–cysteine 111, cysteine 119–cysteine 129, cysteine 123–cysteine 134, cysteine 136–cysteine 145, cysteine 150–cysteine 160, cysteine 154–cysteine 166, and cysteine 168–cysteine 177. 3 EGF-like domains span residues 81 to 112, 115 to 146, and 147 to 178; these read IVPICRHSCGDGFCSRPNMCTCPSGQIAPSCG, SIQHCNIRCMNGGSCSDDHCLCQKGYIGTHCG, and QPVCESGCLNGGRCVAPNRCACTYGFTGPQCE. The interaction with MFAP4 stretch occupies residues 119-329; that stretch reads CNIRCMNGGS…YTSPDGTRCI (211 aa). A TB 1 domain is found at 184–236; that stretch reads GPCFTVVSNQMCQGQLSGIVCTKTLCCATVGRAWGHPCEMCPAQPHPCRRGFI. Residues 195–221 form a hybrid domain 1 region; that stretch reads CQGQLSGIVCTKTLCCATVGRAWGHPC. The EGF-like 4; calcium-binding domain occupies 246–287; the sequence is DVDECQAIPGLCQGGNCINTVGSFECKCPAGHKFNEVSQKCE. 6 disulfide bridges follow: cysteine 250-cysteine 262, cysteine 257-cysteine 271, cysteine 273-cysteine 286, cysteine 292-cysteine 304, cysteine 299-cysteine 313, and cysteine 315-cysteine 328. A glycan (O-linked (Glc) serine) is linked at serine 268. The EGF-like 5; calcium-binding domain maps to 288 to 329; that stretch reads DIDECSTIPGICDGGECTNTVSSYFCKCPPGFYTSPDGTRCI. The TB 2 domain maps to 334-389; that stretch reads GYCYTALTNGRCSNQLPQSITKMQCCCDVGRCWSPGVTVTPEMCPIRATEDFNKLC. An N-linked (GlcNAc...) asparagine glycan is attached at asparagine 448. The EGF-like 6 domain maps to 449–489; the sequence is VTDYCQLFRYLCHNGRCIPTPGSYRCECNKGFQLDLRGECI. 15 disulfides stabilise this stretch: cysteine 453-cysteine 465, cysteine 460-cysteine 474, cysteine 476-cysteine 488, cysteine 494-cysteine 504, cysteine 499-cysteine 513, cysteine 515-cysteine 528, cysteine 534-cysteine 546, cysteine 541-cysteine 555, cysteine 557-cysteine 570, cysteine 576-cysteine 587, cysteine 582-cysteine 596, cysteine 598-cysteine 611, cysteine 617-cysteine 628, cysteine 623-cysteine 637, and cysteine 639-cysteine 652. O-linked (Glc) serine glycosylation occurs at serine 471. Positions 490–529 constitute an EGF-like 7; calcium-binding domain; it reads DVDECEKNPCAGGECINNQGSYTCQCRPGYQSTLTRTECR. O-linked (Glc) serine glycosylation is present at serine 510. The region spanning 530–571 is the EGF-like 8; calcium-binding domain; the sequence is DIDECLQNGRICNNGRCINTDGSFHCVCNAGFHVTRDGKNCE. The region spanning 572 to 612 is the EGF-like 9; calcium-binding domain; that stretch reads DMDECSIRNMCLNGMCINEDGSFKCICKPGFQLASDGRYCK. Residues 613 to 653 form the EGF-like 10; calcium-binding domain; it reads DINECETSGICMNGRCVNTDGSYRCECFPGLAVGLDGRVCV. Residues 659-711 form the TB 3 domain; sequence STCYGGYKRGQCVKPLFGAVTKSECCCASTEYAFGEPCQPCPSQNSAEYQALC. The EGF-like 11; calcium-binding domain maps to 723 to 764; sequence DINECALDPDICPNGICENLRGTYKCICNSGYEVDSTGKNCV. 16 disulfide bridges follow: cysteine 727–cysteine 739, cysteine 734–cysteine 748, cysteine 750–cysteine 763, cysteine 769–cysteine 781, cysteine 776–cysteine 790, cysteine 792–cysteine 805, cysteine 811–cysteine 821, cysteine 816–cysteine 830, cysteine 832–cysteine 845, cysteine 853–cysteine 875, cysteine 862–cysteine 887, cysteine 876–cysteine 890, cysteine 896–cysteine 908, cysteine 914–cysteine 926, cysteine 921–cysteine 935, and cysteine 937–cysteine 950. In terms of domain architecture, EGF-like 12; calcium-binding spans 765-806; that stretch reads DINECVLNSLLCDNGQCRNTPGSFVCTCPKGFIYKPDLKTCE. The 40-residue stretch at 807–846 folds into the EGF-like 13; calcium-binding domain; sequence DIDECESSPCINGVCKNSPGSFICECSSESTLDPTKTICI. The TB 4 domain maps to 851–902; sequence GTCWQTIIDGRCEININGATLKSQCCSSLGAAWGSPCTPCQVDPICGKGYSR. Positions 862–887 are hybrid domain 2; it reads CEININGATLKSQCCSSLGAAWGSPC. In terms of domain architecture, EGF-like 14; calcium-binding spans 910 to 951; sequence DIDECEVFPGVCKNGLCVNSKGSFKCQCPNGMTLDATGRICL. In terms of domain architecture, TB 5 spans 956–1008; the sequence is ETCFLRYEDEECTLPVVGRHRMDACCCSVGAAWGTEECEECPPRNTPEYEELC. Positions 1028–1069 constitute an EGF-like 15; calcium-binding domain; it reads DINECKMIPNLCTHGKCRNTIGSFKCRCDSGFALDSEERNCI. Disulfide bonds link cysteine 1032/cysteine 1044, cysteine 1039/cysteine 1053, cysteine 1055/cysteine 1068, cysteine 1074/cysteine 1086, cysteine 1081/cysteine 1095, cysteine 1097/cysteine 1111, cysteine 1117/cysteine 1129, cysteine 1124/cysteine 1138, cysteine 1140/cysteine 1153, cysteine 1159/cysteine 1171, cysteine 1201/cysteine 1212, cysteine 1208/cysteine 1221, cysteine 1223/cysteine 1236, cysteine 1242/cysteine 1254, cysteine 1249/cysteine 1263, cysteine 1265/cysteine 1278, cysteine 1284/cysteine 1296, cysteine 1291/cysteine 1305, cysteine 1307/cysteine 1320, cysteine 1326/cysteine 1339, cysteine 1333/cysteine 1348, cysteine 1350/cysteine 1361, cysteine 1367/cysteine 1380, cysteine 1374/cysteine 1389, cysteine 1391/cysteine 1402, cysteine 1408/cysteine 1420, cysteine 1415/cysteine 1429, cysteine 1450/cysteine 1461, cysteine 1456/cysteine 1470, cysteine 1472/cysteine 1485, cysteine 1491/cysteine 1502, cysteine 1497/cysteine 1511, cysteine 1513/cysteine 1526, cysteine 1534/cysteine 1562, cysteine 1549/cysteine 1574, cysteine 1563/cysteine 1577, cysteine 1564/cysteine 1589, cysteine 1610/cysteine 1622, cysteine 1617/cysteine 1631, cysteine 1633/cysteine 1646, cysteine 1652/cysteine 1663, cysteine 1658/cysteine 1672, and cysteine 1674/cysteine 1687. An EGF-like 16; calcium-binding domain is found at 1070-1112; the sequence is DIDECRISPDLCGRGQCVNTPGDFECKCDEGYESGFMMMKNCM. The EGF-like 17; calcium-binding domain occupies 1113–1154; it reads DIDECQRDPLLCRGGVCLNTEGSYRCECPSGHQMSPNISACI. O-linked (Glc) serine glycosylation is present at serine 1135. Asparagine 1149 is a glycosylation site (N-linked (GlcNAc...) asparagine). Positions 1155–1196 constitute an EGF-like 18; calcium-binding domain; that stretch reads DINECELSAHLCPHGRCVNLIGKYQRARNPGYHSTPDRLFCV. The 41-residue stretch at 1197-1237 folds into the EGF-like 19; calcium-binding domain; that stretch reads DIDECSIMNGGCETFCTNSEGSYECSCQPGFALMPDQRSCT. Serine 1218 carries an O-linked (Glc) serine glycan. The region spanning 1238-1279 is the EGF-like 20; calcium-binding domain; it reads DIDECEDNPNICDGGQCTNIPGEYRCLCYDGFMASEDMKTCV. Residues 1280-1321 enclose the EGF-like 21; calcium-binding domain; the sequence is DVNECDLNPNICLSGTCENTKGSFICHCDMGYSGKKGKTGCT. The O-linked (Glc) serine glycan is linked to serine 1302. The region spanning 1322–1362 is the EGF-like 22; calcium-binding domain; sequence DINECEIGAHNCDRHAVCTNTAGSFNCSCSPGWIGDGIKCT. The O-linked (Glc) serine glycan is linked to serine 1345. A glycan (N-linked (GlcNAc...) asparagine) is linked at asparagine 1347. One can recognise an EGF-like 23; calcium-binding domain in the interval 1363 to 1403; that stretch reads DLDECSNGTHMCSQHADCKNTMGSYRCLCKEGYTGDGFTCA. The N-linked (GlcNAc...) asparagine glycan is linked to asparagine 1369. An O-linked (Glc) serine glycan is attached at serine 1386. The EGF-like 24; calcium-binding domain occupies 1404 to 1445; the sequence is DLDECSENVKLCGNVQCLYAPGGYHCEYDMGFVPSADRKSCV. In terms of domain architecture, EGF-like 25; calcium-binding spans 1446–1486; it reads DSDECSLPNICVFGTCHNLPGLFRCECEIGYELDRSGGNCT. The N-linked (GlcNAc...) asparagine glycan is linked to asparagine 1484. An EGF-like 26; calcium-binding domain is found at 1487 to 1527; sequence DVNECLEPPTCISGNCVNTPGSYTCVCPPDFELNPTRVGCV. An O-linked (Glc) serine glycan is attached at serine 1508. The tract at residues 1528 to 2731 is C-terminal domain; it reads DTRSGNCYLD…GYPKRGRKRR (1204 aa). Residues 1532 to 1589 enclose the TB 6 domain; it reads GNCYLDVRPRGDNGDTACSNEIGVGVSKASCCCSLGKAWGTPCEQCPPVNTSEYKILC. The Cell attachment site motif lies at 1541 to 1543; that stretch reads RGD. Residue asparagine 1581 is glycosylated (N-linked (GlcNAc...) asparagine). The EGF-like 27; calcium-binding domain occupies 1606–1647; it reads DIDECQELPGLCQGGKCINTFGSFQCRCPTGYYLNEDTRVCD. Serine 1628 carries an O-linked (Glc) serine glycan. The 41-residue stretch at 1648–1688 folds into the EGF-like 28; calcium-binding domain; sequence DVNECETPGICGPGTCYNTVGNYTCICPPDYMQVNGGNNCM. A glycan (N-linked (GlcNAc...) asparagine) is linked at asparagine 1669. Positions 1693–1748 constitute a TB 7 domain; that stretch reads SLCYRNYYADNQTCDGELLFNMTKKMCCCSYNIGRAWNKPCEQCPIPSTDEFATLC. N-linked (GlcNAc...) asparagine glycans are attached at residues asparagine 1703 and asparagine 1713. An EGF-like 29; calcium-binding domain is found at 1766–1807; sequence DIDECREIPGVCENGVCINMVGSFRCECPVGFFYNDKLLVCE. 40 disulfides stabilise this stretch: cysteine 1770–cysteine 1782, cysteine 1777–cysteine 1791, cysteine 1793–cysteine 1806, cysteine 1812–cysteine 1824, cysteine 1818–cysteine 1833, cysteine 1835–cysteine 1847, cysteine 1853–cysteine 1865, cysteine 1860–cysteine 1874, cysteine 1876–cysteine 1889, cysteine 1895–cysteine 1905, cysteine 1900–cysteine 1914, cysteine 1916–cysteine 1928, cysteine 1934–cysteine 1947, cysteine 1942–cysteine 1956, cysteine 1958–cysteine 1971, cysteine 1977–cysteine 1989, cysteine 1984–cysteine 1998, cysteine 2000–cysteine 2011, cysteine 2017–cysteine 2029, cysteine 2024–cysteine 2038, cysteine 2040–cysteine 2053, cysteine 2061–cysteine 2083, cysteine 2070–cysteine 2096, cysteine 2084–cysteine 2099, cysteine 2085–cysteine 2111, cysteine 2131–cysteine 2142, cysteine 2137–cysteine 2151, cysteine 2153–cysteine 2164, cysteine 2170–cysteine 2181, cysteine 2176–cysteine 2190, cysteine 2192–cysteine 2204, cysteine 2210–cysteine 2221, cysteine 2217–cysteine 2230, cysteine 2232–cysteine 2245, cysteine 2251–cysteine 2265, cysteine 2258–cysteine 2274, cysteine 2276–cysteine 2289, cysteine 2295–cysteine 2307, cysteine 2302–cysteine 2316, and cysteine 2318–cysteine 2331. The EGF-like 30; calcium-binding domain maps to 1808 to 1848; it reads DIDECQNGPVCQRNAECINTAGSYRCDCKPGYRFTSTGQCN. O-linked (Glc) serine glycosylation occurs at serine 1830. The region spanning 1849–1890 is the EGF-like 31; calcium-binding domain; the sequence is DRNECQEIPNICSHGQCIDTVGSFYCLCHTGFKTNADQTMCL. Residue serine 1871 is glycosylated (O-linked (Glc) serine). The EGF-like 32; calcium-binding domain maps to 1891 to 1929; sequence DINECERDACGNGTCRNTIGSFNCRCNHGFILSHNNDCI. N-linked (GlcNAc...) asparagine glycosylation occurs at asparagine 1902. The O-linked (Glc) serine glycan is linked to serine 1911. The EGF-like 33; calcium-binding domain occupies 1930 to 1972; sequence DVDECATGNGNLCRNGQCINTVGSFQCQCNEGYEVAPDGRTCV. Serine 1953 carries O-linked (Glc) serine glycosylation. Residues 1973–2012 enclose the EGF-like 34; calcium-binding domain; that stretch reads DINECLLEPGKCAPGTCQNLDGSYRCICPPGYSLQNDKCE. The region spanning 2013–2054 is the EGF-like 35; calcium-binding domain; the sequence is DIDECVEEPEICALGTCSNTEGSFKCLCPDGFSLSSTGRRCQ. Serine 2035 carries an O-linked (Glc) serine glycan. A TB 8 domain is found at 2059-2111; sequence SYCYAKFEGGKCSSPKSRNHSKQECCCALKGEGWGDPCELCPTEPDEAFRQIC. Asparagine 2077 is a glycosylation site (N-linked (GlcNAc...) asparagine). In terms of domain architecture, EGF-like 36; calcium-binding spans 2127–2165; the sequence is DMDECKEPDVCKHGQCINTDGSYRCECPFGYILEGNECV. A glycan (O-linked (Glc) serine) is linked at serine 2148. One can recognise an EGF-like 37; calcium-binding domain in the interval 2166–2205; the sequence is DTDECSVGNPCGNGTCKNVIGGFECTCEEGFEPGPMMTCE. Residue asparagine 2178 is glycosylated (N-linked (GlcNAc...) asparagine). Positions 2206–2246 constitute an EGF-like 38; calcium-binding domain; that stretch reads DINECAQNPLLCAFRCVNTYGSYECKCPTGYVLREDRRMCK. Serine 2227 is a glycosylation site (O-linked (Glc) serine). The 44-residue stretch at 2247–2290 folds into the EGF-like 39; calcium-binding domain; the sequence is DEDECEEGKHDCAEKQMECKNLIGMYICICGPGYQRRPDGEGCV. The 42-residue stretch at 2291–2332 folds into the EGF-like 40; calcium-binding domain; it reads DENECQTKPGICENGRCLNTRGSYTCECNDGFTASPTQDECL. The O-linked (Glc) serine glycan is linked to serine 2313. The TB 9 domain occupies 2337 to 2390; it reads GYCFTEVLQNMCQIGSSNRNPVTKSECCCDGGRGWGPHCEICPFQGTVAFKKLC. Residues 2402–2443 form the EGF-like 41; calcium-binding domain; the sequence is DIDECKVIHDVCRNGECINDRGSYHCICKTGYTPDITGTACV. Intrachain disulfides connect cysteine 2406–cysteine 2418, cysteine 2413–cysteine 2427, cysteine 2429–cysteine 2442, cysteine 2448–cysteine 2459, cysteine 2455–cysteine 2468, cysteine 2470–cysteine 2483, cysteine 2489–cysteine 2500, cysteine 2496–cysteine 2509, cysteine 2511–cysteine 2522, cysteine 2528–cysteine 2541, cysteine 2535–cysteine 2550, cysteine 2552–cysteine 2565, cysteine 2571–cysteine 2581, cysteine 2577–cysteine 2590, cysteine 2592–cysteine 2605, cysteine 2611–cysteine 2622, cysteine 2617–cysteine 2631, cysteine 2633–cysteine 2646, cysteine 2652–cysteine 2663, cysteine 2659–cysteine 2672, and cysteine 2674–cysteine 2686. The EGF-like 42; calcium-binding domain occupies 2444 to 2484; the sequence is DLNECNQAPKPCNFICKNTEGSYQCSCPKGYILQEDGRSCK. Serine 2465 carries O-linked (Glc) serine glycosylation. The 39-residue stretch at 2485–2523 folds into the EGF-like 43; calcium-binding domain; the sequence is DLDECATKQHNCQFLCVNTIGSFACKCPPGFTQHHTACI. Residues 2524–2566 form the EGF-like 44; calcium-binding domain; it reads DNNECTSDINLCGAKGICQNTPGSFTCECQRGFSLDQSGASCE. O-linked (Glc) serine glycosylation occurs at serine 2547. The EGF-like 45; calcium-binding domain occupies 2567-2606; it reads DVDECEGNHRCQHGCQNIIGGYRCSCPQGYLQHYQWNQCV. Positions 2607-2647 constitute an EGF-like 46; calcium-binding domain; it reads DENECLSAHICGGASCHNTLGSYKCMCPAGFQYEQFSGGCQ. O-linked (Glc) serine glycosylation is present at serine 2628. Residues 2648–2687 enclose the EGF-like 47; calcium-binding domain; the sequence is DINECGSSQAPCSYGCSNTEGGYLCGCPPGYFRIGQGHCV. Residues serine 2702 and serine 2709 each carry the phosphoserine modification. Residues asparagine 2734, asparagine 2750, and asparagine 2767 are each glycosylated (N-linked (GlcNAc...) asparagine).

The protein belongs to the fibrillin family. Interacts with COL16A1. Interacts with integrin alpha-V/beta-3. Interacts with ADAMTS10; this interaction promotes microfibril assembly. Interacts with THSD4; this interaction promotes fibril formation. Interacts (via N-terminal domain) with FBLN2 and FBLN5. Interacts with ELN. Forms a ternary complex with ELN and FBLN2 or FBLN5 and a significant interaction with ELN seen only in the presence of FBLN2 or FBLN5. Interacts (via N-terminal domain) with LTBP2 (via C-terminal domain) in a Ca(+2)-dependent manner. Interacts (via N-terminal domain) with LTBP1 (via C-terminal domain). Interacts with integrins ITGA5:ITGB1, ITGAV:ITGB3 and ITGAV:ITGB6. Interacts (via N-terminal domain) with BMP2, BMP4, BMP7, BMP10 and GDF5. Interacts (via N-terminal domain) with MFAP2 and MFAP5. Interacts with ADAMTSL5. Interacts with MFAP4. Interacts (via N-terminal domain) with TNFSF11 in a Ca(+2)-dependent manner. Interacts (via N-terminal domain) with EFEMP2; this interaction inhibits EFEMP2 binding to LOX and ELN. In terms of processing, cleavage of N- and C-terminus by furin is required for incorporation into the extracellular matrix and assembly into microfibrils. The C-terminus, which corresponds to the Asprosin chain, was initially thought to constitute a propeptide. Fibrillin-1 and Asprosin chains are still linked together during the secretion from cells, but are subsequently separated by furin, an essential step for incorporation of Fibrillin-1 into the nascent microfibrils. Forms intermolecular disulfide bonds either with other fibrillin-1 molecules or with other components of the microfibrils. Post-translationally, O-glycosylated on serine residues by POGLUT2 and POGLUT3 which is necessary for efficient protein secretion.

The protein resides in the secreted. Its subcellular location is the extracellular space. It localises to the extracellular matrix. In terms of biological role, structural component of the 10-12 nm diameter microfibrils of the extracellular matrix, which conveys both structural and regulatory properties to load-bearing connective tissues. Fibrillin-1-containing microfibrils provide long-term force bearing structural support. In tissues such as the lung, blood vessels and skin, microfibrils form the periphery of the elastic fiber, acting as a scaffold for the deposition of elastin. In addition, microfibrils can occur as elastin-independent networks in tissues such as the ciliary zonule, tendon, cornea and glomerulus where they provide tensile strength and have anchoring roles. Fibrillin-1 also plays a key role in tissue homeostasis through specific interactions with growth factors, such as the bone morphogenetic proteins (BMPs), growth and differentiation factors (GDFs) and latent transforming growth factor-beta-binding proteins (LTBPs), cell-surface integrins and other extracellular matrix protein and proteoglycan components. Regulates osteoblast maturation by controlling TGF-beta bioavailability and calibrating TGF-beta and BMP levels, respectively. Negatively regulates osteoclastogenesis by binding and sequestering an osteoclast differentiation and activation factor TNFSF11. This leads to disruption of TNFSF11-induced Ca(2+) signaling and impairment of TNFSF11-mediated nuclear translocation and activation of transcription factor NFATC1 which regulates genes important for osteoclast differentiation and function. Mediates cell adhesion via its binding to cell surface receptors integrins ITGAV:ITGB3 and ITGA5:ITGB1. Binds heparin and this interaction plays an important role in the assembly of microfibrils. Functionally, hormone that targets the liver to increase plasma glucose levels. Secreted by white adipose tissue and circulates in the plasma. Acts in response to fasting and promotes blood glucose elevation by binding to the surface of hepatocytes. Promotes hepatocyte glucose release by activating the protein kinase A activity in the liver, resulting in rapid glucose release into the circulation. In Sus scrofa (Pig), this protein is Fibrillin-1.